We begin with the raw amino-acid sequence, 107 residues long: V-type proton ATPase subunit G (107 aa).

The protein belongs to the V-ATPase G subunit family. V-ATPase is a heteromultimeric enzyme composed of a peripheral catalytic V1 complex (components A to H) attached to an integral membrane V0 proton pore complex (components: a, c, c', c'' and d).

In terms of biological role, catalytic subunit of the peripheral V1 complex of vacuolar ATPase (V-ATPase). V-ATPase is responsible for acidifying a variety of intracellular compartments in eukaryotic cells. The chain is V-type proton ATPase subunit G (atp6v1g) from Dictyostelium discoideum (Social amoeba).